A 328-amino-acid chain; its full sequence is Methionyl-tRNA formyltransferase (328 aa).

121–124 lines the (6S)-5,6,7,8-tetrahydrofolate pocket; sequence SLLP.

It belongs to the Fmt family.

The enzyme catalyses L-methionyl-tRNA(fMet) + (6R)-10-formyltetrahydrofolate = N-formyl-L-methionyl-tRNA(fMet) + (6S)-5,6,7,8-tetrahydrofolate + H(+). In terms of biological role, attaches a formyl group to the free amino group of methionyl-tRNA(fMet). The formyl group appears to play a dual role in the initiator identity of N-formylmethionyl-tRNA by promoting its recognition by IF2 and preventing the misappropriation of this tRNA by the elongation apparatus. This Paraburkholderia phytofirmans (strain DSM 17436 / LMG 22146 / PsJN) (Burkholderia phytofirmans) protein is Methionyl-tRNA formyltransferase.